The following is an 873-amino-acid chain: MANTVGGILSGVNPFHYNSSSPLTLFLFQACLILLVCNLIHIPFSMMRQPKVISEVISGVILGPTIFGQIPNYTNTIFPTSSIPGLNLVANLGIILFMFFLGLEVDIAFIKKHLKKALVIGIVTLAVPFGFGCLLAIPLFHTYANKTEGERHIKFSVFMVFIAVSISVTAFPVLCRILNELRLIKDRAGIVVLAAGIINDIMGWILLALSIILSSAEGSPVNTVYILLITFAWFLIYFFPLKYLLRWVLIRTHELDRSKPSPLATMCILFIMFISAYFTDIIGVHPIFGAFIAGLVVPRDDHYVVKLTERMEDIPNIVFIPIYFAVAGLNVDLTLLNEGRDWGYVFATIGIAIFTKIISGTLTAKLTGLFWREATAAGVLMSCKGIVEIVVLTVGLNAGIISRKIFGMFVLMALVSTFVTTPLTQLVYPDSYRDGVRKSLSTPAEDDGAADGLDSEGVDKTEINTQLNSLADVSKYRIGELTTVINTTEAISPSLKLLNYLSLGVSPKPKNNKHKNETSLSRMTTATDSTLKSNTFKIKKMVHIWSKSVDDVDTNLSVIDEKLTPFEGVGALRAIHLRLLTERTTDLLQSSSLYNDDPHFTANTDSLLQIFDIFSNLSKIPFSSEVIFSTMREKAANIATMKMDSTDLILLPLKGASYEYRGSPVFIDEKYANFDHIYSHLLGLNELSSTFFKSIFQSLKANFAVQISNTYGRLNADRFKRKRFNLLLPKPYLTQSDYLGLYLLLLICYRDGYNNDNASCSIFINSKNIDFAKDLSTAFAEHDWLNESTIKIVDIPFETKVPEEAIEKPSFIETVLDVGLSDTALADIEETTFIIGEDLPDESEPFSEEVRTVIFEGSNRRFDTLIVHHFSSE.

At 1 to 23 (MANTVGGILSGVNPFHYNSSSPL) the chain is on the extracellular side. The chain crosses the membrane as a helical span at residues 24–44 (TLFLFQACLILLVCNLIHIPF). Residues 45-51 (SMMRQPK) lie on the Cytoplasmic side of the membrane. Residues 52–72 (VISEVISGVILGPTIFGQIPN) form a helical membrane-spanning segment. Residues 73-82 (YTNTIFPTSS) lie on the Extracellular side of the membrane. The helical transmembrane segment at 83-103 (IPGLNLVANLGIILFMFFLGL) threads the bilayer. Residues 104 to 116 (EVDIAFIKKHLKK) lie on the Cytoplasmic side of the membrane. The helical transmembrane segment at 117–137 (ALVIGIVTLAVPFGFGCLLAI) threads the bilayer. Topologically, residues 138–154 (PLFHTYANKTEGERHIK) are extracellular. Residues 155 to 175 (FSVFMVFIAVSISVTAFPVLC) form a helical membrane-spanning segment. Over 176 to 188 (RILNELRLIKDRA) the chain is Cytoplasmic. Residues 189 to 209 (GIVVLAAGIINDIMGWILLAL) traverse the membrane as a helical segment. Over 210 to 220 (SIILSSAEGSP) the chain is Extracellular. Residues 221 to 241 (VNTVYILLITFAWFLIYFFPL) traverse the membrane as a helical segment. At 242–267 (KYLLRWVLIRTHELDRSKPSPLATMC) the chain is on the cytoplasmic side. A helical membrane pass occupies residues 268 to 288 (ILFIMFISAYFTDIIGVHPIF). The Extracellular segment spans residues 289–316 (GAFIAGLVVPRDDHYVVKLTERMEDIPN). The chain crosses the membrane as a helical span at residues 317–337 (IVFIPIYFAVAGLNVDLTLLN). The Cytoplasmic segment spans residues 338 to 341 (EGRD). Residues 342 to 362 (WGYVFATIGIAIFTKIISGTL) form a helical membrane-spanning segment. At 363–375 (TAKLTGLFWREAT) the chain is on the extracellular side. A helical membrane pass occupies residues 376–396 (AAGVLMSCKGIVEIVVLTVGL). Topologically, residues 397–404 (NAGIISRK) are cytoplasmic. The helical transmembrane segment at 405–425 (IFGMFVLMALVSTFVTTPLTQ) threads the bilayer. Residues 426 to 726 (LVYPDSYRDG…DRFKRKRFNL (301 aa)) are Extracellular-facing. S557 carries the phosphoserine modification. A Glycyl lysine isopeptide (Lys-Gly) (interchain with G-Cter in ubiquitin) cross-link involves residue K562. The chain crosses the membrane as a helical span at residues 727 to 747 (LLPKPYLTQSDYLGLYLLLLI). Over 748–873 (CYRDGYNNDN…TLIVHHFSSE (126 aa)) the chain is Cytoplasmic.

The protein belongs to the monovalent cation:proton antiporter 2 (CPA2) transporter (TC 2.A.37) family.

The protein resides in the membrane. Functionally, potassium-proton antiport. This Saccharomyces cerevisiae (strain ATCC 204508 / S288c) (Baker's yeast) protein is K(+)/H(+) antiporter 1 (KHA1).